The primary structure comprises 310 residues: Malate dehydrogenase (310 aa).

NAD(+) contacts are provided by residues 7-12 and Asp32; that span reads GAGNVG. Substrate is bound by residues Arg81 and Arg87. NAD(+) contacts are provided by residues Asn94 and 117–119; that span reads VSN. Asn119 and Arg150 together coordinate substrate. His174 (proton acceptor) is an active-site residue.

This sequence belongs to the LDH/MDH superfamily. MDH type 3 family.

It catalyses the reaction (S)-malate + NAD(+) = oxaloacetate + NADH + H(+). In terms of biological role, catalyzes the reversible oxidation of malate to oxaloacetate. This Chlorobium phaeobacteroides (strain DSM 266 / SMG 266 / 2430) protein is Malate dehydrogenase.